Here is a 366-residue protein sequence, read N- to C-terminus: tRNA-specific 2-thiouridylase MnmA (366 aa).

Residues 6-13 (AMSGGVDS) and Leu-32 each bind ATP. Catalysis depends on Cys-101, which acts as the Nucleophile. Cys-101 and Cys-197 are disulfide-bonded. Gly-125 contributes to the ATP binding site. Residues 147 to 149 (KDQ) form an interaction with tRNA region. Cys-197 (cysteine persulfide intermediate) is an active-site residue.

It belongs to the MnmA/TRMU family.

It is found in the cytoplasm. It catalyses the reaction S-sulfanyl-L-cysteinyl-[protein] + uridine(34) in tRNA + AH2 + ATP = 2-thiouridine(34) in tRNA + L-cysteinyl-[protein] + A + AMP + diphosphate + H(+). Functionally, catalyzes the 2-thiolation of uridine at the wobble position (U34) of tRNA, leading to the formation of s(2)U34. The polypeptide is tRNA-specific 2-thiouridylase MnmA (Cutibacterium acnes (strain DSM 16379 / KPA171202) (Propionibacterium acnes)).